The chain runs to 338 residues: Malate dehydrogenase, mitochondrial (338 aa).

The transit peptide at 1–24 (MLSALARPAGAALRRSFSTSAQNN) directs the protein to the mitochondrion. NAD(+) is bound by residues 31–37 (GASGGIG) and D57. O-linked (GlcNAc) serine glycosylation is present at S33. N6-acetyllysine; alternate occurs at positions 78 and 91. An N6-succinyllysine; alternate mark is found at K78 and K91. 2 residues coordinate substrate: R104 and R110. Residues N117 and 140-142 (IAN) contribute to the NAD(+) site. Residue N142 coordinates substrate. Residue K165 is modified to N6-acetyllysine. Substrate is bound at residue R176. Residue K185 is modified to N6-acetyllysine; alternate. At K185 the chain carries N6-succinyllysine; alternate. The active-site Proton acceptor is the H200. K203 carries the N6-succinyllysine modification. An N6-acetyllysine; alternate mark is found at K215 and K239. Residues K215 and K239 each carry the N6-succinyllysine; alternate modification. Position 239 is an N6-malonyllysine; alternate (K239). The residue at position 246 (S246) is a Phosphoserine. M251 is a binding site for NAD(+). K269 carries the N6-succinyllysine modification. N6-acetyllysine; alternate occurs at positions 296, 301, and 307. N6-succinyllysine; alternate is present on residues K296, K301, and K307. N6-malonyllysine; alternate is present on K307. Residue T309 is modified to Phosphothreonine. 2 positions are modified to N6-acetyllysine; alternate: K314 and K324. K314 and K324 each carry N6-succinyllysine; alternate. The residue at position 326 (S326) is a Phosphoserine. K328, K329, and K335 each carry N6-acetyllysine; alternate. N6-succinyllysine; alternate is present on K328. The residue at position 329 (K329) is an N6-malonyllysine; alternate. The residue at position 335 (K335) is an N6-succinyllysine; alternate.

It belongs to the LDH/MDH superfamily. MDH type 1 family. As to quaternary structure, homodimer. Acetylation is enhanced after treatment either with trichostin A (TCA) or with nicotinamide (NAM) with the appearance of tri- and tetraacetylations. Glucose also increases acetylation. Acetylation of Lys-239 and Lys-314 is observed in liver mitochondria from fasted mice but not from fed mice.

The protein resides in the mitochondrion matrix. It catalyses the reaction (S)-malate + NAD(+) = oxaloacetate + NADH + H(+). With respect to regulation, enzyme activity is enhanced by acetylation. This chain is Malate dehydrogenase, mitochondrial (Mdh2), found in Mus musculus (Mouse).